Here is a 96-residue protein sequence, read N- to C-terminus: UPF0235 protein VCM66_0443 (96 aa).

Belongs to the UPF0235 family.

This is UPF0235 protein VCM66_0443 from Vibrio cholerae serotype O1 (strain M66-2).